The primary structure comprises 480 residues: Aspartyl/glutamyl-tRNA(Asn/Gln) amidotransferase subunit B (480 aa).

The protein belongs to the GatB/GatE family. GatB subfamily. Heterotrimer of A, B and C subunits.

It catalyses the reaction L-glutamyl-tRNA(Gln) + L-glutamine + ATP + H2O = L-glutaminyl-tRNA(Gln) + L-glutamate + ADP + phosphate + H(+). It carries out the reaction L-aspartyl-tRNA(Asn) + L-glutamine + ATP + H2O = L-asparaginyl-tRNA(Asn) + L-glutamate + ADP + phosphate + 2 H(+). Functionally, allows the formation of correctly charged Asn-tRNA(Asn) or Gln-tRNA(Gln) through the transamidation of misacylated Asp-tRNA(Asn) or Glu-tRNA(Gln) in organisms which lack either or both of asparaginyl-tRNA or glutaminyl-tRNA synthetases. The reaction takes place in the presence of glutamine and ATP through an activated phospho-Asp-tRNA(Asn) or phospho-Glu-tRNA(Gln). This is Aspartyl/glutamyl-tRNA(Asn/Gln) amidotransferase subunit B from Streptococcus agalactiae serotype Ia (strain ATCC 27591 / A909 / CDC SS700).